A 110-amino-acid polypeptide reads, in one-letter code: BolA-like protein 3 (110 aa).

Belongs to the BolA/IbaG family. Interacts with NFU1.

The protein resides in the mitochondrion. Functionally, acts as a mitochondrial iron-sulfur (Fe-S) cluster assembly factor that facilitates (Fe-S) cluster insertion into a subset of mitochondrial proteins. Probably acts together with NFU1. This chain is BolA-like protein 3 (Bola3), found in Mus musculus (Mouse).